Here is a 134-residue protein sequence, read N- to C-terminus: DNA-binding protein inhibitor ID-2 (134 aa).

Serine 14 and serine 25 each carry phosphoserine. Residues 23 to 75 (SRSKTPVDDPMSLLYNMNDCYSKLKELVPSIPQNKKVSKMEILQHVIDYILDL) enclose the bHLH domain. A Nuclear export signal motif is present at residues 106–115 (LNTDISILSL).

Interacts with GATA4 and NKX2-5. Interacts with NR0B2. Interacts with CLOCK and BMAL1. Interacts with IFI204. Interacts with NEDD9/HEF1. Interacts with ASB4; this interaction promotes ID2 proteasomal degradation. In terms of processing, ubiquitinated in a ASB4-depedent manner, leading to proteasomal degradation. Post-translationally, phosphorylated in vitro by CDK1, PKA and PKC. In terms of tissue distribution, highly expressed in early fetal tissues, including those of the central nervous system.

Its subcellular location is the cytoplasm. The protein localises to the nucleus. Functionally, transcriptional regulator (lacking a basic DNA binding domain) which negatively regulates the basic helix-loop-helix (bHLH) transcription factors by forming heterodimers and inhibiting their DNA binding and transcriptional activity. Implicated in regulating a variety of cellular processes, including cellular growth, senescence, differentiation, apoptosis, angiogenesis, and neoplastic transformation. Inhibits skeletal muscle and cardiac myocyte differentiation. Regulates the circadian clock by repressing the transcriptional activator activity of the CLOCK-BMAL1 heterodimer. Restricts the CLOCK and BMAL1 localization to the cytoplasm. Plays a role in both the input and output pathways of the circadian clock: in the input component, is involved in modulating the magnitude of photic entrainment and in the output component, contributes to the regulation of a variety of liver clock-controlled genes involved in lipid metabolism. This is DNA-binding protein inhibitor ID-2 (ID2) from Homo sapiens (Human).